We begin with the raw amino-acid sequence, 333 residues long: Complement C1q and tumor necrosis factor-related protein 9 (333 aa).

Residues 1-19 (MRIWWLLLVMGACTRSVFS) form the signal peptide. The disordered stretch occupies residues 22–194 (TCRQGHSGIP…GDRGEKGKVG (173 aa)). Collagen-like domains follow at residues 24–82 (RQGH…DGRV), 84–130 (AKGI…KGEV), and 134–193 (GPEG…KGKV). 4-hydroxyproline is present on residues Pro-31, Pro-34, and Pro-40. The span at 42-57 (RDGRDGAKGDKGDAGE) shows a compositional bias: basic and acidic residues. 3 positions are modified to 4-hydroxyproline: Pro-58, Pro-61, and Pro-64. Basic and acidic residues predominate over residues 67–88 (DGIRGEKGEPGADGRVEAKGIK). Residue Lys-73 is modified to 5-hydroxylysine. O-linked (Gal...) hydroxylysine glycosylation occurs at Lys-73. Pro-76 and Pro-115 each carry 4-hydroxyproline. Residue Lys-127 is modified to 5-hydroxylysine. Lys-127 is a glycosylation site (O-linked (Gal...) hydroxylysine). Residues Pro-151, Pro-160, and Pro-175 each carry the 4-hydroxyproline modification. Residues 183–193 (WKGDRGEKGKV) are compositionally biased toward basic and acidic residues. The 137-residue stretch at 197–333 (PLVPKSAFTV…FTGFLLFSSS (137 aa)) folds into the C1q domain.

In terms of assembly, multimers (predominantly trimers). Interacts with ADIPOQ via the C1q domain to form a heterotrimeric complex. In terms of processing, the isomeric forms of the hydroxylated amino acids could not be determined in the mass-spectrometric methods reported in PubMed:18787108 but are assumed on the basis of their occurrence in collagen-like domains. As to expression, expressed predominantly in adipose tissue. Females express higher levels than males.

It is found in the secreted. Functionally, probable adipokine. Activates AMPK, AKT, and p44/42 MAPK signaling pathways. The polypeptide is Complement C1q and tumor necrosis factor-related protein 9 (C1qtnf9) (Mus musculus (Mouse)).